We begin with the raw amino-acid sequence, 325 residues long: Chain length determinant protein (325 aa).

Over 1–31 the chain is Cytoplasmic; the sequence is MRVENNNVSGQNLDPEQIDLIDLLVQLWRGK. The chain crosses the membrane as a helical span at residues 32–52; sequence MTIIISVIVAIVLAIGYLVVA. Topologically, residues 53-294 are periplasmic; sequence KEKWTSTAIV…LPIRRDSPKK (242 aa). The helical transmembrane segment at 295 to 315 threads the bilayer; sequence AITLILAVLLGGMVGAGIVLG. The Cytoplasmic segment spans residues 316 to 325; sequence RNALRNYNAK.

This sequence belongs to the WzzB/Cld/Rol family.

Its subcellular location is the cell inner membrane. It functions in the pathway bacterial outer membrane biogenesis; lipopolysaccharide biosynthesis. Functionally, confers a modal distribution of chain length on the O-antigen component of lipopolysaccharide (LPS). Gives rise to a reduced number of short chain molecules and increases in numbers of longer molecules, with a modal value of 13 (in strain O111/M92) and of 17 (in strain K12). The protein is Chain length determinant protein (wzzB) of Escherichia coli.